Here is a 1061-residue protein sequence, read N- to C-terminus: Calcium-transporting ATPase 4, endoplasmic reticulum-type (1061 aa).

Positions 1–21 (MGKGGEDCGNKQTNSSELVKS) are disordered. Over 1 to 70 (MGKGGEDCGN…NELEKPEGTS (70 aa)) the chain is Cytoplasmic. Residues 71–91 (IFKLILEQFNDTLVRILLAAA) form a helical membrane-spanning segment. Residues 92-115 (VISFVLAFFDGDEGGEMGITAFVE) are Lumenal-facing. A helical membrane pass occupies residues 116–135 (PLVIFLILIVNAIVGIWQET). At 136–278 (NAEKALEALK…EEDTPLKKKL (143 aa)) the chain is on the cytoplasmic side. The chain crosses the membrane as a helical span at residues 279 to 298 (NEFGEVLTMIIGLICALVWL). Residues 299–327 (INVKYFLSWEYVDGWPRNFKFSFEKCTYY) lie on the Lumenal side of the membrane. A helical transmembrane segment spans residues 328–345 (FEIAVALAVAAIPEGLPA). The Ca(2+) site is built by valine 336, alanine 337, isoleucine 339, and glutamate 341. Residues 346-786 (VITTCLALGT…GEGRSIYNNM (441 aa)) are Cytoplasmic-facing. Aspartate 383 functions as the 4-aspartylphosphate intermediate in the catalytic mechanism. 2 residues coordinate Mg(2+): aspartate 731 and aspartate 735. Residues 787-806 (KAFIRYMISSNIGEVASIFL) traverse the membrane as a helical segment. Positions 797 and 800 each coordinate Ca(2+). The Lumenal portion of the chain corresponds to 807–816 (TAALGIPEGM). Residues 817–837 (IPVQLLWVNLVTDGPPATALG) form a helical membrane-spanning segment. The Ca(2+) site is built by asparagine 825, threonine 828, and aspartate 829. Residues 838–857 (FNPPDKDIMKKPPRRSDDSL) are Cytoplasmic-facing. A helical transmembrane segment spans residues 858 to 880 (ITAWILFRYMVIGLYVGVATVGV). Topologically, residues 881 to 950 (FIIWYTHNSF…YFQQGKIKAS (70 aa)) are lumenal. Residues 951–970 (TLSLSVLVAIEMFNSLNALS) form a helical membrane-spanning segment. Ca(2+) is bound at residue glutamate 961. The Cytoplasmic segment spans residues 971–983 (EDGSLVTMPPWVN). A helical membrane pass occupies residues 984–1002 (PWLLLAMAVSFGLHFVILY). Over 1003-1017 (VPFLAQVFGIVPLSL) the chain is Lumenal. A helical transmembrane segment spans residues 1018–1038 (NEWLLVLAVSLPVILIDEVLK). The Cytoplasmic segment spans residues 1039–1061 (FVGRCTSGYRYSPRTPSAKQKEE).

It belongs to the cation transport ATPase (P-type) (TC 3.A.3) family. Type IIA subfamily.

It localises to the membrane. The catalysed reaction is Ca(2+)(in) + ATP + H2O = Ca(2+)(out) + ADP + phosphate + H(+). Functionally, this magnesium-dependent enzyme catalyzes the hydrolysis of ATP coupled with the translocation of calcium from the cytosol to an endomembrane compartment. The protein is Calcium-transporting ATPase 4, endoplasmic reticulum-type (ECA4) of Arabidopsis thaliana (Mouse-ear cress).